The following is a 342-amino-acid chain: S-adenosylmethionine:tRNA ribosyltransferase-isomerase (342 aa).

Belongs to the QueA family. Monomer.

The protein resides in the cytoplasm. It catalyses the reaction 7-aminomethyl-7-carbaguanosine(34) in tRNA + S-adenosyl-L-methionine = epoxyqueuosine(34) in tRNA + adenine + L-methionine + 2 H(+). It participates in tRNA modification; tRNA-queuosine biosynthesis. Its function is as follows. Transfers and isomerizes the ribose moiety from AdoMet to the 7-aminomethyl group of 7-deazaguanine (preQ1-tRNA) to give epoxyqueuosine (oQ-tRNA). This is S-adenosylmethionine:tRNA ribosyltransferase-isomerase from Campylobacter jejuni subsp. jejuni serotype O:2 (strain ATCC 700819 / NCTC 11168).